Here is a 460-residue protein sequence, read N- to C-terminus: UDP-glucuronate 4-epimerase 6 (460 aa).

Helical transmembrane passes span 41 to 61 (ATLLVALVLVLIFAINYPPLS) and 111 to 131 (GLSVLVTGAAGFVGSHCSLAL). An NAD(+)-binding site is contributed by 113 to 144 (SVLVTGAAGFVGSHCSLALRKRGDGVLGFDNF). The active-site Proton acceptor is the tyrosine 263.

It belongs to the NAD(P)-dependent epimerase/dehydratase family. In terms of assembly, homodimer. As to expression, in roots, leaf veins, siliques, flowers, pollen and stems.

It localises to the golgi apparatus. The protein localises to the golgi stack membrane. The enzyme catalyses UDP-alpha-D-glucuronate = UDP-alpha-D-galacturonate. In terms of biological role, involved in the synthesis of the negatively charged monosaccharide that forms the backbone of pectic cell wall components. The chain is UDP-glucuronate 4-epimerase 6 (GAE6) from Arabidopsis thaliana (Mouse-ear cress).